The chain runs to 424 residues: Kynurenine--oxoglutarate transaminase 1 (424 aa).

Residue Gly36 participates in substrate binding. An N6-succinyllysine modification is found at Lys82. Asn185 contacts substrate. N6-(pyridoxal phosphate)lysine is present on Lys247. Arg398 provides a ligand contact to substrate. Lys413 is subject to N6-succinyllysine.

The protein belongs to the class-I pyridoxal-phosphate-dependent aminotransferase family. In terms of assembly, homodimer. Requires pyridoxal 5'-phosphate as cofactor.

It is found in the cytoplasm. Its subcellular location is the cytosol. The catalysed reaction is L-kynurenine + 2-oxoglutarate = kynurenate + L-glutamate + H2O. It catalyses the reaction 3-phenylpyruvate + L-glutamine = 2-oxoglutaramate + L-phenylalanine. It carries out the reaction an S-substituted L-cysteine + H2O = a thiol + pyruvate + NH4(+). The protein operates within amino-acid degradation; L-kynurenine degradation; kynurenate from L-kynurenine: step 1/2. Functionally, catalyzes the irreversible transamination of the L-tryptophan metabolite L-kynurenine to form kynurenic acid (KA), an intermediate in the tryptophan catabolic pathway which is also a broad spectrum antagonist of the three ionotropic excitatory amino acid receptors among others. Metabolizes the cysteine conjugates of certain halogenated alkenes and alkanes to form reactive metabolites. Catalyzes the beta-elimination of S-conjugates and Se-conjugates of L-(seleno)cysteine, resulting in the cleavage of the C-S or C-Se bond. This Mus musculus (Mouse) protein is Kynurenine--oxoglutarate transaminase 1 (Kyat1).